The primary structure comprises 322 residues: Corticotropin-releasing factor-binding protein (322 aa).

Residues 1–24 (MSPNFKLQCHFTLILLTALRGESR) form the signal peptide. Cystine bridges form between cysteine 60–cysteine 81, cysteine 104–cysteine 141, cysteine 183–cysteine 205, cysteine 237–cysteine 264, and cysteine 277–cysteine 318. Asparagine 204 is a glycosylation site (N-linked (GlcNAc...) asparagine).

It belongs to the CRF-binding protein family.

It is found in the secreted. In terms of biological role, binds CRF and inactivates it. May prevent inappropriate pituitary-adrenal stimulation in pregnancy. The chain is Corticotropin-releasing factor-binding protein (Crhbp) from Rattus norvegicus (Rat).